A 155-amino-acid polypeptide reads, in one-letter code: 3-hydroxyacyl-[acyl-carrier-protein] dehydratase FabZ (155 aa).

H54 is an active-site residue.

The protein belongs to the thioester dehydratase family. FabZ subfamily.

Its subcellular location is the cytoplasm. It carries out the reaction a (3R)-hydroxyacyl-[ACP] = a (2E)-enoyl-[ACP] + H2O. Functionally, involved in unsaturated fatty acids biosynthesis. Catalyzes the dehydration of short chain beta-hydroxyacyl-ACPs and long chain saturated and unsaturated beta-hydroxyacyl-ACPs. This is 3-hydroxyacyl-[acyl-carrier-protein] dehydratase FabZ from Burkholderia mallei (strain NCTC 10247).